We begin with the raw amino-acid sequence, 128 residues long: Glyoxylase-like domain-containing protein (128 aa).

One can recognise a VOC domain in the interval 6 to 125 (QISGIEIPAT…EGNTHAICTR (120 aa)).

It functions in the pathway mycotoxin biosynthesis. In terms of biological role, glyoxylase-like domain-containing protein; part of the gene cluster that mediates the biosynthesis of the selective antifungal agent ascochitine, an o-quinone methide that plays a possible protective role against other microbial competitors in nature and is considered to be important for pathogenicity of legume-associated Didymella species. The pathway probably begins with the synthesis of a keto-aldehyde intermediate by the ascochitine non-reducing polyketide synthase pksAC from successive condensations of 4 malonyl-CoA units, presumably with a simple acetyl-CoA starter unit. Release of the keto-aldehyde intermediate is consistent with the presence of the C-terminal reductive release domain. The HR-PKS (orf7) probably makes a diketide starter unit which is passed to the non-reducing polyketide synthase pksAC for further extension, producing ascochital and ascochitine. The aldehyde dehydrogenase (orf1), the 2-oxoglutarate-dependent dioxygenase (orf3) and the dehydrogenase (orf9) are probably involved in subsequent oxidations of methyl groups to the carboxylic acid of the heterocyclic ring. The ascochitine gene cluster also includes a gene encoding a short peptide with a cupin domain (orf2) that is often found in secondary metabolite gene clusters and which function has still to be determined. The polypeptide is Glyoxylase-like domain-containing protein (Didymella fabae (Leaf and pod spot disease fungus)).